A 785-amino-acid chain; its full sequence is Ribosome biogenesis protein BOP1 homolog (785 aa).

The span at 1 to 11 (MTKKLTIKRKV) shows a compositional bias: basic residues. Residues 1–160 (MTKKLTIKRK…DSDTSDEEDI (160 aa)) form a disordered region. 3 stretches are compositionally biased toward acidic residues: residues 45–54 (EDSTDDEGID), 61–73 (SSED…DEEG), and 85–102 (SGDD…EDDA). Basic and acidic residues predominate over residues 103 to 112 (DAKKSSKNND). Positions 150–159 (ADSDTSDEED) are enriched in acidic residues. WD repeat units follow at residues 446–487 (GHTD…RTIE), 489–527 (EDVV…KLLV), 571–613 (THFK…SQIP), 616–654 (KSKG…LIKK), 657–696 (TNSK…KPYQ), 700–739 (LHRN…DLLQ), and 755–785 (REEF…RLFT).

The protein belongs to the WD repeat BOP1/ERB1 family.

The protein localises to the nucleus. It localises to the nucleolus. Its subcellular location is the nucleoplasm. Required for maturation of ribosomal RNAs and formation of the large ribosomal subunit. This Drosophila persimilis (Fruit fly) protein is Ribosome biogenesis protein BOP1 homolog.